Here is a 265-residue protein sequence, read N- to C-terminus: UPF0354 protein BH3252 (265 aa).

This sequence belongs to the UPF0354 family.

This chain is UPF0354 protein BH3252, found in Halalkalibacterium halodurans (strain ATCC BAA-125 / DSM 18197 / FERM 7344 / JCM 9153 / C-125) (Bacillus halodurans).